Here is a 24-residue protein sequence, read N- to C-terminus: 47 kDa cell wall protein (24 aa).

It is found in the secreted. The protein localises to the cell wall. This chain is 47 kDa cell wall protein, found in Nicotiana tabacum (Common tobacco).